Consider the following 296-residue polypeptide: 4-diphosphocytidyl-2-C-methyl-D-erythritol kinase (296 aa).

Lysine 13 is a catalytic residue. Proline 104–serine 114 contributes to the ATP binding site. Residue aspartate 146 is part of the active site.

Belongs to the GHMP kinase family. IspE subfamily.

The catalysed reaction is 4-CDP-2-C-methyl-D-erythritol + ATP = 4-CDP-2-C-methyl-D-erythritol 2-phosphate + ADP + H(+). Its pathway is isoprenoid biosynthesis; isopentenyl diphosphate biosynthesis via DXP pathway; isopentenyl diphosphate from 1-deoxy-D-xylulose 5-phosphate: step 3/6. Its function is as follows. Catalyzes the phosphorylation of the position 2 hydroxy group of 4-diphosphocytidyl-2C-methyl-D-erythritol. The polypeptide is 4-diphosphocytidyl-2-C-methyl-D-erythritol kinase (Hahella chejuensis (strain KCTC 2396)).